Here is a 216-residue protein sequence, read N- to C-terminus: Uracil phosphoribosyltransferase (216 aa).

5-phospho-alpha-D-ribose 1-diphosphate is bound by residues arginine 85, arginine 110, and 135–143; that span reads DPMVATGYS. Uracil contacts are provided by residues isoleucine 200 and 205–207; that span reads GDA. Aspartate 206 is a binding site for 5-phospho-alpha-D-ribose 1-diphosphate.

The protein belongs to the UPRTase family. The cofactor is Mg(2+).

It carries out the reaction UMP + diphosphate = 5-phospho-alpha-D-ribose 1-diphosphate + uracil. Its pathway is pyrimidine metabolism; UMP biosynthesis via salvage pathway; UMP from uracil: step 1/1. Its activity is regulated as follows. Allosterically activated by GTP. Its function is as follows. Catalyzes the conversion of uracil and 5-phospho-alpha-D-ribose 1-diphosphate (PRPP) to UMP and diphosphate. The polypeptide is Uracil phosphoribosyltransferase (Burkholderia cenocepacia (strain ATCC BAA-245 / DSM 16553 / LMG 16656 / NCTC 13227 / J2315 / CF5610) (Burkholderia cepacia (strain J2315))).